The chain runs to 281 residues: tRNA pseudouridine synthase A (281 aa).

The Nucleophile role is filled by aspartate 55. Tyrosine 110 is a binding site for substrate.

It belongs to the tRNA pseudouridine synthase TruA family.

It carries out the reaction uridine(38/39/40) in tRNA = pseudouridine(38/39/40) in tRNA. Formation of pseudouridine at positions 38, 39 and 40 in the anticodon stem and loop of transfer RNAs. The chain is tRNA pseudouridine synthase A from Methanocorpusculum labreanum (strain ATCC 43576 / DSM 4855 / Z).